The following is a 290-amino-acid chain: UPF0761 membrane protein YihY (290 aa).

6 consecutive transmembrane segments (helical) span residues 44-64 (LLSL…FPMF), 104-124 (VGAC…DSAL), 140-160 (FAVY…SLAI), 183-203 (IFPL…VPTI), 210-230 (AIVG…GFAL), and 244-264 (VLAV…IVLL).

The protein belongs to the UPF0761 family.

It is found in the cell inner membrane. In Escherichia coli O127:H6 (strain E2348/69 / EPEC), this protein is UPF0761 membrane protein YihY.